Consider the following 268-residue polypeptide: Ribonuclease P protein subunit p30 (268 aa).

Ala-2 carries the post-translational modification N-acetylalanine. Residue Ser-251 is modified to Phosphoserine.

The protein belongs to the eukaryotic/archaeal RNase P protein component 3 family. In terms of assembly, component of nuclear RNase P and RNase MRP ribonucleoproteins. RNase P consists of a catalytic RNA moiety and about 10 protein subunits; POP1, POP4, POP5, POP7, RPP14, RPP21, RPP25, RPP30, RPP38 and RPP40. Within the RNase P complex, POP1, POP7 and RPP25 form the 'finger' subcomplex, POP5, RPP14, RPP40 and homodimeric RPP30 form the 'palm' subcomplex, and RPP21, POP4 and RPP38 form the 'wrist' subcomplex. All subunits of the RNase P complex interact with the catalytic RNA. Several subunits of RNase P are also part of the RNase MRP complex. RNase MRP consists of a catalytic RNA moiety and about 8 protein subunits; POP1, POP7, RPP25, RPP30, RPP38, RPP40 and possibly also POP4 and POP5.

It is found in the nucleus. Its subcellular location is the nucleolus. Functionally, component of ribonuclease P, a ribonucleoprotein complex that generates mature tRNA molecules by cleaving their 5'-ends. Also a component of the MRP ribonuclease complex, which cleaves pre-rRNA sequences. The chain is Ribonuclease P protein subunit p30 (RPP30) from Bos taurus (Bovine).